The following is a 153-amino-acid chain: Aspartate carbamoyltransferase regulatory chain (153 aa).

Cysteine 109, cysteine 114, cysteine 138, and cysteine 141 together coordinate Zn(2+).

The protein belongs to the PyrI family. Contains catalytic and regulatory chains. The cofactor is Zn(2+).

Involved in allosteric regulation of aspartate carbamoyltransferase. This is Aspartate carbamoyltransferase regulatory chain from Escherichia coli (strain ATCC 8739 / DSM 1576 / NBRC 3972 / NCIMB 8545 / WDCM 00012 / Crooks).